We begin with the raw amino-acid sequence, 742 residues long: RING finger protein 145 homolog (742 aa).

11 consecutive transmembrane segments (helical) span residues 109 to 129 (AAII…TLPL), 138 to 158 (HFLS…YVDL), 178 to 198 (HGFH…LLEV), 233 to 253 (ACTG…PSLI), 285 to 305 (ILEL…YVEL), 318 to 338 (ILLT…ALAV), 368 to 388 (SGYT…FLGM), 395 to 415 (ILLA…LFEI), 438 to 458 (ICIA…MLAL), 463 to 483 (IYTA…IGVI), and 533 to 553 (VKVG…IVNI). The RING-type; atypical zinc-finger motif lies at 592-630 (CAICFIEMKEEARITPCKHYFHGPCLRKWLAVKMVCPLC). Disordered regions lie at residues 642–684 (KSSS…PGDM) and 722–742 (AYES…ENNN). A compositionally biased stretch (acidic residues) spans 659 to 672 (AAVEENPENPEEQP).

It is found in the membrane. The protein resides in the golgi apparatus. Its subcellular location is the cis-Golgi network. The protein localises to the trans-Golgi network. The enzyme catalyses S-ubiquitinyl-[E2 ubiquitin-conjugating enzyme]-L-cysteine + [acceptor protein]-L-lysine = [E2 ubiquitin-conjugating enzyme]-L-cysteine + N(6)-ubiquitinyl-[acceptor protein]-L-lysine.. E3 ubiquitin ligase that catalyzes the direct transfer of ubiquitin from E2 ubiquitin-conjugating enzyme to a specific substrate. Acting downstream of probable Golgi transport protein eas-1, involved in inhibition of activation of transcription factor sbp-1, thereby playing a role in regulating AMsh glial cell size. The sequence is that of RING finger protein 145 homolog from Caenorhabditis elegans.